The primary structure comprises 474 residues: Hydrogenobyrinate a,c-diamide synthase (474 aa).

Residues 269 to 459 (VVAVAGGQAF…LHTHWAGCPQ (191 aa)) enclose the GATase cobBQ-type domain. The Nucleophile role is filled by Cys-352.

The protein belongs to the CobB/CbiA family. Requires Mg(2+) as cofactor.

The catalysed reaction is hydrogenobyrinate + 2 L-glutamine + 2 ATP + 2 H2O = hydrogenobyrinate a,c-diamide + 2 L-glutamate + 2 ADP + 2 phosphate + 2 H(+). Its pathway is cofactor biosynthesis; adenosylcobalamin biosynthesis; cob(II)yrinate a,c-diamide from precorrin-2 (aerobic route): step 9/10. Functionally, catalyzes the ATP-dependent amidation of the two carboxylate groups at positions a and c of hydrogenobyrinate, using either L-glutamine or ammonia as the nitrogen source. This Thermobifida fusca (strain YX) protein is Hydrogenobyrinate a,c-diamide synthase.